We begin with the raw amino-acid sequence, 576 residues long: Proline--tRNA ligase (576 aa).

The protein belongs to the class-II aminoacyl-tRNA synthetase family. ProS type 1 subfamily. In terms of assembly, homodimer.

It localises to the cytoplasm. It catalyses the reaction tRNA(Pro) + L-proline + ATP = L-prolyl-tRNA(Pro) + AMP + diphosphate. In terms of biological role, catalyzes the attachment of proline to tRNA(Pro) in a two-step reaction: proline is first activated by ATP to form Pro-AMP and then transferred to the acceptor end of tRNA(Pro). As ProRS can inadvertently accommodate and process non-cognate amino acids such as alanine and cysteine, to avoid such errors it has two additional distinct editing activities against alanine. One activity is designated as 'pretransfer' editing and involves the tRNA(Pro)-independent hydrolysis of activated Ala-AMP. The other activity is designated 'posttransfer' editing and involves deacylation of mischarged Ala-tRNA(Pro). The misacylated Cys-tRNA(Pro) is not edited by ProRS. The polypeptide is Proline--tRNA ligase (Trichlorobacter lovleyi (strain ATCC BAA-1151 / DSM 17278 / SZ) (Geobacter lovleyi)).